The primary structure comprises 1292 residues: (E3-independent) E2 ubiquitin-conjugating enzyme (1292 aa).

Positions Met-1–Ala-37 are enriched in pro residues. Disordered stretches follow at residues Met-1–Ser-56 and Glu-85–Ala-114. A compositionally biased stretch (low complexity) spans Pro-38–Ser-56. Phosphoserine is present on residues Ser-50, Ser-87, Ser-89, Ser-399, and Ser-401. Disordered stretches follow at residues Ser-401 to Gln-459, Arg-472 to Ser-519, and Ile-714 to Gly-746. A compositionally biased stretch (basic and acidic residues) spans Cys-406 to Ala-427. Ser-441 is subject to Phosphoserine. Residues Gln-478–Asp-490 show a composition bias toward acidic residues. Residues Thr-488 and Thr-491 each carry the phosphothreonine modification. The segment covering Thr-491 to Thr-510 has biased composition (low complexity). Positions Arg-512–Arg-536 match the Nuclear localization signal motif. Ser-515 carries the phosphoserine modification. Residues Asp-732 to Glu-742 show a composition bias toward acidic residues. Residues Arg-812–Val-882 adopt a coiled-coil conformation. Ser-836 is modified (phosphoserine). Residue Thr-838 is modified to Phosphothreonine. Ser-839 carries the phosphoserine modification. Over residues Val-882–Glu-893 the composition is skewed to basic and acidic residues. The interval Val-882–Pro-903 is disordered. A Phosphoserine modification is found at Ser-896. In terms of domain architecture, UBC core spans Lys-953 to Thr-1113. The Glycyl thioester intermediate role is filled by Cys-1040. Residues Asn-1160–Lys-1248 are disordered.

This sequence belongs to the ubiquitin-conjugating enzyme family. As to quaternary structure, interacts with CPNE1 (via VWFA domain) and CPNE4 (via VWFA domain). Interacts with UBR2. Phosphorylated. Phosphorylation affects subcellular location. In terms of processing, ubiquitinated: autoubiquitinates, possibly affecting its subcellular location. Predominantly expressed in skeletal muscle and heart.

The protein localises to the cytoplasm. It localises to the nucleus. It catalyses the reaction S-ubiquitinyl-[E1 ubiquitin-activating enzyme]-L-cysteine + [acceptor protein]-L-lysine = [E1 ubiquitin-activating enzyme]-L-cysteine + N(6)-monoubiquitinyl-[acceptor protein]-L-lysine.. It functions in the pathway protein modification; protein ubiquitination. Inhibited by phenylarsine oxide (PAO). In terms of biological role, E2/E3 hybrid ubiquitin-protein ligase that displays both E2 and E3 ligase activities and mediates monoubiquitination of target proteins. Negatively regulates TRAF6-mediated NF-kappa-B activation independently of its E2 activity. Acts as a positive regulator of BMP7 signaling by mediating monoubiquitination of SMAD6, thereby regulating adipogenesis. Mediates monoubiquitination at different sites of the nuclear localization signal (NLS) of BAP1, leading to cytoplasmic retention of BAP1. Also able to monoubiquitinate the NLS of other chromatin-associated proteins, such as INO80 and CXXC1, affecting their subcellular location. Acts as a regulator of retrograde transport by assisting the TRIM27:MAGEL2 E3 ubiquitin ligase complex to mediate 'Lys-63'-linked ubiquitination of WASHC1, leading to promote endosomal F-actin assembly. The polypeptide is (E3-independent) E2 ubiquitin-conjugating enzyme (UBE2O) (Homo sapiens (Human)).